The sequence spans 213 residues: ATP-dependent Clp protease proteolytic subunit (213 aa).

S114 (nucleophile) is an active-site residue. H139 is an active-site residue.

It belongs to the peptidase S14 family. In terms of assembly, fourteen ClpP subunits assemble into 2 heptameric rings which stack back to back to give a disk-like structure with a central cavity, resembling the structure of eukaryotic proteasomes.

The protein localises to the cytoplasm. The catalysed reaction is Hydrolysis of proteins to small peptides in the presence of ATP and magnesium. alpha-casein is the usual test substrate. In the absence of ATP, only oligopeptides shorter than five residues are hydrolyzed (such as succinyl-Leu-Tyr-|-NHMec, and Leu-Tyr-Leu-|-Tyr-Trp, in which cleavage of the -Tyr-|-Leu- and -Tyr-|-Trp bonds also occurs).. Cleaves peptides in various proteins in a process that requires ATP hydrolysis. Has a chymotrypsin-like activity. Plays a major role in the degradation of misfolded proteins. The protein is ATP-dependent Clp protease proteolytic subunit of Pseudomonas syringae pv. syringae (strain B728a).